The following is a 626-amino-acid chain: Chaperone protein HtpG (626 aa).

Residues 1–341 (METKQFKAES…SEDLSLNISR (341 aa)) are a; substrate-binding. Residues 342–552 (EILQHDRQLK…EGELSIEMEK (211 aa)) are b. The interval 490 to 509 (DLGIEGEEKENTSSSDDKEN) is disordered. Positions 498-509 (KENTSSSDDKEN) are enriched in basic and acidic residues. A c region spans residues 553–626 (VLNAMPNNQN…FTNNICKIMK (74 aa)).

The protein belongs to the heat shock protein 90 family. In terms of assembly, homodimer.

The protein resides in the cytoplasm. Its function is as follows. Molecular chaperone. Has ATPase activity. The sequence is that of Chaperone protein HtpG from Clostridium botulinum (strain Okra / Type B1).